Consider the following 103-residue polypeptide: Truncated secreted TNF-receptor-like protein A53R (103 aa).

The TNFR-Cys 1 repeat unit spans residues 36–73 (SCDKGEYLDKRHNQCCNRCPPGEFAKVRCNGNDNTKCE). 3 cysteine pairs are disulfide-bonded: C37-C50, C51-C64, and C54-C72. The TNFR-Cys 2; truncated repeat unit spans residues 74–103 (RCPPHTYTTIPIILMDVINVENAQPDHLIR).

The protein belongs to the poxviridae A53R protein family.

The polypeptide is Truncated secreted TNF-receptor-like protein A53R (Vaccinia virus (strain Western Reserve) (VACV)).